Reading from the N-terminus, the 1529-residue chain is uncharacterized protein (1529 aa).

Low complexity predominate over residues 1–11 (MDKNNNNNNSN). Disordered regions lie at residues 1 to 85 (MDKN…SKGV), 335 to 371 (LLSN…WSSS), 660 to 694 (LPNL…TATA), 798 to 843 (NCNI…SSYS), 1016 to 1035 (SSLP…NTNN), 1334 to 1364 (QQQQ…QLQQ), and 1454 to 1497 (QQQV…SRLP). The segment covering 24–42 (QKRVQNPSFSSGQSRTVPS) has biased composition (polar residues). The segment covering 51–79 (ISSSSSSSSISTTNNTTTTTTSGTGSTSS) has biased composition (low complexity). Residues 810–833 (NNNNNNNNNNNNNNNNNNNNNNNN) show a composition bias toward low complexity. 2 stretches are compositionally biased toward polar residues: residues 834 to 843 (VLPRSNSSYS) and 1016 to 1027 (SSLPISQNLSDD). A compositionally biased stretch (low complexity) spans 1454-1494 (QQQVQTPSSPQTLASLLGNSSSNTLTSSSSTLSLNESSTLS).

This is an uncharacterized protein from Dictyostelium discoideum (Social amoeba).